Consider the following 116-residue polypeptide: Protein Wnt-5a (116 aa).

Serine 1 carries the O-palmitoleoyl serine; by PORCN lipid modification. 2 N-linked (GlcNAc...) asparagine glycosylation sites follow: asparagine 69 and asparagine 83. Cysteine 82 and cysteine 97 are disulfide-bonded.

Belongs to the Wnt family. In terms of processing, palmitoleoylation is required for efficient binding to frizzled receptors. Depalmitoleoylation leads to Wnt signaling pathway inhibition.

The protein resides in the secreted. The protein localises to the extracellular space. Its subcellular location is the extracellular matrix. Ligand for members of the frizzled family of seven transmembrane receptors. Can activate or inhibit canonical Wnt signaling, depending on receptor context. Required during embryogenesis for extension of the primary anterior-posterior axis. The polypeptide is Protein Wnt-5a (WNT-5A) (Plestiodon skiltonianus (Western skink)).